Consider the following 553-residue polypeptide: Phosphoglucomutase (553 aa).

Residues 1–24 form a disordered region; the sequence is MQATVKRYPTTPISGQTMGTSGLR. A compositionally biased stretch (polar residues) spans 11 to 20; the sequence is TPISGQTMGT. Substrate contacts are provided by residues Thr20, Arg24, 117–118, and Lys131; that span reads SH. Ser117 functions as the Phosphoserine intermediate in the catalytic mechanism. Mg(2+) is bound at residue Ser117. The Mg(2+) site is built by Asp289, Asp291, and Asp293. Substrate-binding positions include 293-294, Thr352, 371-373, Lys384, and Arg509; these read DR and EES.

Belongs to the phosphohexose mutase family. Mg(2+) is required as a cofactor.

The protein resides in the cytoplasm. The catalysed reaction is alpha-D-glucose 1-phosphate = alpha-D-glucose 6-phosphate. Functionally, this enzyme participates in both the breakdown and synthesis of glucose. This Entamoeba dispar protein is Phosphoglucomutase (pgm).